A 104-amino-acid polypeptide reads, in one-letter code: Large ribosomal subunit protein uL24 (104 aa).

This sequence belongs to the universal ribosomal protein uL24 family. Part of the 50S ribosomal subunit.

Functionally, one of two assembly initiator proteins, it binds directly to the 5'-end of the 23S rRNA, where it nucleates assembly of the 50S subunit. In terms of biological role, one of the proteins that surrounds the polypeptide exit tunnel on the outside of the subunit. The protein is Large ribosomal subunit protein uL24 of Neorickettsia sennetsu (strain ATCC VR-367 / Miyayama) (Ehrlichia sennetsu).